Consider the following 101-residue polypeptide: Small ribosomal subunit protein uS14 (101 aa).

This sequence belongs to the universal ribosomal protein uS14 family. As to quaternary structure, part of the 30S ribosomal subunit. Contacts proteins S3 and S10.

Its function is as follows. Binds 16S rRNA, required for the assembly of 30S particles and may also be responsible for determining the conformation of the 16S rRNA at the A site. The protein is Small ribosomal subunit protein uS14 of Methylorubrum extorquens (strain PA1) (Methylobacterium extorquens).